Reading from the N-terminus, the 439-residue chain is ATP-dependent RNA helicase RhlB (439 aa).

A Q motif motif is present at residues 9-37 (QKFADLPLHPEVKQALAENGFEFCTPIQA). A Helicase ATP-binding domain is found at 40–219 (LPVLLQSKDI…YDHMNDPVKV (180 aa)). 53–60 (AQTGTGKT) serves as a coordination point for ATP. Positions 165–168 (DEAD) match the DEAD box motif. The 148-residue stretch at 243-390 (KIRLLLTLIE…VSNYDRDALL (148 aa)) folds into the Helicase C-terminal domain. Residues 395-439 (PPVKIHRKHPAGARNLRERSGAGRPQGAHRSGGRPPRHDRTRRQP) are disordered. Positions 425-439 (SGGRPPRHDRTRRQP) are enriched in basic residues.

This sequence belongs to the DEAD box helicase family. RhlB subfamily. As to quaternary structure, component of the RNA degradosome, which is a multiprotein complex involved in RNA processing and mRNA degradation.

Its subcellular location is the cytoplasm. It catalyses the reaction ATP + H2O = ADP + phosphate + H(+). DEAD-box RNA helicase involved in RNA degradation. Has RNA-dependent ATPase activity and unwinds double-stranded RNA. The sequence is that of ATP-dependent RNA helicase RhlB from Shewanella sp. (strain MR-4).